The following is a 469-amino-acid chain: 3-isopropylmalate dehydratase large subunit (469 aa).

[4Fe-4S] cluster-binding residues include Cys350, Cys410, and Cys413.

It belongs to the aconitase/IPM isomerase family. LeuC type 1 subfamily. Heterodimer of LeuC and LeuD. [4Fe-4S] cluster is required as a cofactor.

The catalysed reaction is (2R,3S)-3-isopropylmalate = (2S)-2-isopropylmalate. The protein operates within amino-acid biosynthesis; L-leucine biosynthesis; L-leucine from 3-methyl-2-oxobutanoate: step 2/4. Catalyzes the isomerization between 2-isopropylmalate and 3-isopropylmalate, via the formation of 2-isopropylmaleate. This chain is 3-isopropylmalate dehydratase large subunit, found in Rhizobium johnstonii (strain DSM 114642 / LMG 32736 / 3841) (Rhizobium leguminosarum bv. viciae).